Here is an 838-residue protein sequence, read N- to C-terminus: Protein P (838 aa).

Positions 1-179 are terminal protein domain (TP); sequence MPLSYQHFRK…FCGSPYSWEQ (179 aa). The tract at residues 180-341 is spacer; that stretch reads ELQHSQRHGD…YCLSHLVNLR (162 aa). A disordered region spans residues 219 to 245; that stretch reads GLQPHQGPLASSQPGRSGSIRARAHPS. The tract at residues 342 to 685 is polymerase/reverse transcriptase domain (RT); it reads EDWGPCDDHG…YMNLYPVARQ (344 aa). A Reverse transcriptase domain is found at 352–595; it reads EHHIRIPRTP…YSLNFMGYII (244 aa). Aspartate 424, aspartate 546, and aspartate 547 together coordinate Mg(2+).

This sequence belongs to the hepadnaviridae P protein family.

It catalyses the reaction DNA(n) + a 2'-deoxyribonucleoside 5'-triphosphate = DNA(n+1) + diphosphate. It carries out the reaction Endonucleolytic cleavage to 5'-phosphomonoester.. Its activity is regulated as follows. Activated by host HSP70 and HSP40 in vitro to be able to bind the epsilon loop of the pgRNA. Because deletion of the RNase H region renders the protein partly chaperone-independent, the chaperones may be needed indirectly to relieve occlusion of the RNA-binding site by this domain. Inhibited by several reverse-transcriptase inhibitors: Lamivudine, Adefovir and Entecavir. Its function is as follows. Multifunctional enzyme that converts the viral RNA genome into dsDNA in viral cytoplasmic capsids. This enzyme displays a DNA polymerase activity that can copy either DNA or RNA templates, and a ribonuclease H (RNase H) activity that cleaves the RNA strand of RNA-DNA heteroduplexes in a partially processive 3'- to 5'-endonucleasic mode. Neo-synthesized pregenomic RNA (pgRNA) are encapsidated together with the P protein, and reverse-transcribed inside the nucleocapsid. Initiation of reverse-transcription occurs first by binding the epsilon loop on the pgRNA genome, and is initiated by protein priming, thereby the 5'-end of (-)DNA is covalently linked to P protein. Partial (+)DNA is synthesized from the (-)DNA template and generates the relaxed circular DNA (RC-DNA) genome. After budding and infection, the RC-DNA migrates in the nucleus, and is converted into a plasmid-like covalently closed circular DNA (cccDNA). The activity of P protein does not seem to be necessary for cccDNA generation, and is presumably released from (+)DNA by host nuclear DNA repair machinery. This is Protein P from Hepatitis B virus genotype A2 subtype adw (isolate Japan/Nishioka/1983) (HBV-A).